The following is a 50-amino-acid chain: Parvalbumin (50 aa).

Residues 38 to 50 form the EF-hand domain; it reads KTHEQVKKVFNIL.

Belongs to the parvalbumin family.

Functionally, probably regulates the activity of the caudal neurosecretory system. Binds two calcium ions. The sequence is that of Parvalbumin from Scyliorhinus canicula (Small-spotted catshark).